We begin with the raw amino-acid sequence, 447 residues long: 23S rRNA (uracil(1939)-C(5))-methyltransferase RlmD (447 aa).

The 60-residue stretch at 7 to 66 folds into the TRAM domain; sequence RKPLSQEPQKASIEALTHEGRGIAHVAGKTVFIDGALPGETVWFHYLRRRGKFDEGRVLE. [4Fe-4S] cluster is bound by residues Cys-79, Cys-85, Cys-88, and Cys-168. Residues Gln-275, Phe-304, Asn-309, Glu-325, Asp-352, and Asp-374 each contribute to the S-adenosyl-L-methionine site. Cys-400 acts as the Nucleophile in catalysis.

It belongs to the class I-like SAM-binding methyltransferase superfamily. RNA M5U methyltransferase family. RlmD subfamily.

It catalyses the reaction uridine(1939) in 23S rRNA + S-adenosyl-L-methionine = 5-methyluridine(1939) in 23S rRNA + S-adenosyl-L-homocysteine + H(+). Catalyzes the formation of 5-methyl-uridine at position 1939 (m5U1939) in 23S rRNA. The chain is 23S rRNA (uracil(1939)-C(5))-methyltransferase RlmD from Nitrosococcus oceani (strain ATCC 19707 / BCRC 17464 / JCM 30415 / NCIMB 11848 / C-107).